The primary structure comprises 1277 residues: Clustered mitochondria protein 1 (1277 aa).

Disordered stretches follow at residues L19 to K39 and L148 to K176. Positions H27–Q36 are enriched in basic residues. Over residues I153–K176 the composition is skewed to basic and acidic residues. Positions P339–A596 constitute a Clu domain. 3 TPR repeats span residues G704–D738, A1020–V1053, and G1148–Q1181. A disordered region spans residues L1212–K1277. The span at K1235–D1249 shows a compositional bias: basic and acidic residues. S1247 carries the post-translational modification Phosphoserine. The span at S1264–K1277 shows a compositional bias: basic residues.

This sequence belongs to the CLU family. As to quaternary structure, may associate with the eukaryotic translation initiation factor 3 (eIF-3) complex. Associates with the 80S ribosome.

Its subcellular location is the cytoplasm. MRNA-binding protein involved in proper cytoplasmic distribution of mitochondria. This is Clustered mitochondria protein 1 from Saccharomyces cerevisiae (strain ATCC 204508 / S288c) (Baker's yeast).